The sequence spans 317 residues: tRNA dimethylallyltransferase (317 aa).

An ATP-binding site is contributed by 19–26 (GPTASGKS). Residue 21-26 (TASGKS) participates in substrate binding. An interaction with substrate tRNA region spans residues 44 to 47 (DSMQ).

Belongs to the IPP transferase family. As to quaternary structure, monomer. The cofactor is Mg(2+).

The enzyme catalyses adenosine(37) in tRNA + dimethylallyl diphosphate = N(6)-dimethylallyladenosine(37) in tRNA + diphosphate. Its function is as follows. Catalyzes the transfer of a dimethylallyl group onto the adenine at position 37 in tRNAs that read codons beginning with uridine, leading to the formation of N6-(dimethylallyl)adenosine (i(6)A). The chain is tRNA dimethylallyltransferase from Methylorubrum extorquens (strain CM4 / NCIMB 13688) (Methylobacterium extorquens).